The chain runs to 305 residues: MAAAGREKGYVTQTAAALDKSPSLSPQLAAPIRGRPKKCLVYPHAPKSSRLSRSVLRWLQGLDLSFFPRNINRDFSNGFLIAEIFCIYYPWELELSSFENGTSLKVKLGNWAQLEKFLARKKFKLPKELIHGTIHCKAGVPEILIEEVYTLLTHREIKSIQDDFVNFTDYSYQMRLPLVSRSTVSKSIKDNIRLSELLSNPNMLTNELKAEFLILLHMLQRKLGRKLNPEWFDVKPTVGEVTLNHLPAQASGRRYNLKVKRGRVVPVLPNIGSGGSSHREIHVKQAGQHSYYSAMKPIRNMDKKP.

One can recognise a Calponin-homology (CH) domain in the interval 49 to 155 (SRLSRSVLRW…EEVYTLLTHR (107 aa)).

The protein resides in the nucleus. Functionally, may play a role in apoptosis regulation. The sequence is that of Spermatogenesis-associated protein 4 (SPATA4) from Pan troglodytes (Chimpanzee).